A 465-amino-acid chain; its full sequence is UDP-N-acetylmuramate--L-alanine ligase (465 aa).

112–118 (GTHGKTT) lines the ATP pocket.

The protein belongs to the MurCDEF family.

Its subcellular location is the cytoplasm. It carries out the reaction UDP-N-acetyl-alpha-D-muramate + L-alanine + ATP = UDP-N-acetyl-alpha-D-muramoyl-L-alanine + ADP + phosphate + H(+). It functions in the pathway cell wall biogenesis; peptidoglycan biosynthesis. Functionally, cell wall formation. The chain is UDP-N-acetylmuramate--L-alanine ligase from Burkholderia multivorans (strain ATCC 17616 / 249).